A 257-amino-acid chain; its full sequence is V-type proton ATPase subunit D (257 aa).

A disordered region spans residues 211–233; sequence KKKDLKAKEAQKEENSANKTIME. A compositionally biased stretch (basic and acidic residues) spans 216 to 226; that stretch reads KAKEAQKEENS.

The protein belongs to the V-ATPase D subunit family. As to quaternary structure, V-ATPase is a heteromultimeric enzyme composed of a peripheral catalytic V1 complex (components A to H) attached to an integral membrane V0 proton pore complex (components: a, c, c', c'' and d).

In terms of biological role, subunit of the peripheral V1 complex of vacuolar ATPase. Vacuolar ATPase is responsible for acidifying a variety of intracellular compartments in eukaryotic cells, thus providing most of the energy required for transport processes in the vacuolar system. In Dictyostelium discoideum (Social amoeba), this protein is V-type proton ATPase subunit D (atp6v1d).